Here is a 659-residue protein sequence, read N- to C-terminus: Pesticidal crystal protein Cry3Ba (659 aa).

The disordered stretch occupies residues 1 to 41; the sequence is MIRMGGRKMNPNNRSEYDTIKVTPNSELPTNHNQYPLADNP. Residues 22–41 show a composition bias toward polar residues; it reads VTPNSELPTNHNQYPLADNP.

It belongs to the delta endotoxin family.

In terms of biological role, promotes colloidosmotic lysis by binding to the midgut epithelial cells of Coleoptera. The protein is Pesticidal crystal protein Cry3Ba (cry3Ba) of Bacillus thuringiensis subsp. tolworthi.